We begin with the raw amino-acid sequence, 397 residues long: UPF0261 protein mlr3387 (397 aa).

Belongs to the UPF0261 family.

The polypeptide is UPF0261 protein mlr3387 (Mesorhizobium japonicum (strain LMG 29417 / CECT 9101 / MAFF 303099) (Mesorhizobium loti (strain MAFF 303099))).